The chain runs to 259 residues: Ubiquinone/menaquinone biosynthesis C-methyltransferase UbiE (259 aa).

Residues Thr82, Asp103, and 131-132 contribute to the S-adenosyl-L-methionine site; that span reads NA.

The protein belongs to the class I-like SAM-binding methyltransferase superfamily. MenG/UbiE family.

It carries out the reaction a 2-demethylmenaquinol + S-adenosyl-L-methionine = a menaquinol + S-adenosyl-L-homocysteine + H(+). The enzyme catalyses a 2-methoxy-6-(all-trans-polyprenyl)benzene-1,4-diol + S-adenosyl-L-methionine = a 5-methoxy-2-methyl-3-(all-trans-polyprenyl)benzene-1,4-diol + S-adenosyl-L-homocysteine + H(+). It functions in the pathway quinol/quinone metabolism; menaquinone biosynthesis; menaquinol from 1,4-dihydroxy-2-naphthoate: step 2/2. Its pathway is cofactor biosynthesis; ubiquinone biosynthesis. In terms of biological role, methyltransferase required for the conversion of demethylmenaquinol (DMKH2) to menaquinol (MKH2) and the conversion of 2-polyprenyl-6-methoxy-1,4-benzoquinol (DDMQH2) to 2-polyprenyl-3-methyl-6-methoxy-1,4-benzoquinol (DMQH2). The chain is Ubiquinone/menaquinone biosynthesis C-methyltransferase UbiE from Agrobacterium fabrum (strain C58 / ATCC 33970) (Agrobacterium tumefaciens (strain C58)).